The chain runs to 481 residues: UDP-glycosyltransferase 88F4 (481 aa).

UDP-alpha-D-glucose is bound by residues S288, 357–358, 375–383, and 397–400; these read WA, HCGWNSVLE, and YAEQ.

It belongs to the UDP-glycosyltransferase family.

Glycosyltransferase that may possess chalcone and dihydrochalcone 2'-O-glucosyltransferase activity. This is UDP-glycosyltransferase 88F4 from Malus domestica (Apple).